The primary structure comprises 203 residues: 3-isopropylmalate dehydratase small subunit (203 aa).

The protein belongs to the LeuD family. LeuD type 1 subfamily. In terms of assembly, heterodimer of LeuC and LeuD.

It carries out the reaction (2R,3S)-3-isopropylmalate = (2S)-2-isopropylmalate. The protein operates within amino-acid biosynthesis; L-leucine biosynthesis; L-leucine from 3-methyl-2-oxobutanoate: step 2/4. Catalyzes the isomerization between 2-isopropylmalate and 3-isopropylmalate, via the formation of 2-isopropylmaleate. This is 3-isopropylmalate dehydratase small subunit from Symbiobacterium thermophilum (strain DSM 24528 / JCM 14929 / IAM 14863 / T).